The following is a 119-amino-acid chain: Large ribosomal subunit protein bL19 (119 aa).

This sequence belongs to the bacterial ribosomal protein bL19 family.

In terms of biological role, this protein is located at the 30S-50S ribosomal subunit interface and may play a role in the structure and function of the aminoacyl-tRNA binding site. This is Large ribosomal subunit protein bL19 from Pseudarthrobacter chlorophenolicus (strain ATCC 700700 / DSM 12829 / CIP 107037 / JCM 12360 / KCTC 9906 / NCIMB 13794 / A6) (Arthrobacter chlorophenolicus).